The sequence spans 212 residues: Probable nicotinate-nucleotide adenylyltransferase (212 aa).

This sequence belongs to the NadD family.

It catalyses the reaction nicotinate beta-D-ribonucleotide + ATP + H(+) = deamido-NAD(+) + diphosphate. It participates in cofactor biosynthesis; NAD(+) biosynthesis; deamido-NAD(+) from nicotinate D-ribonucleotide: step 1/1. In terms of biological role, catalyzes the reversible adenylation of nicotinate mononucleotide (NaMN) to nicotinic acid adenine dinucleotide (NaAD). In Shewanella sp. (strain MR-7), this protein is Probable nicotinate-nucleotide adenylyltransferase.